The sequence spans 32 residues: Photosystem II reaction center protein Psb30 (32 aa).

Residues 3 to 23 form a helical membrane-spanning segment; the sequence is IVIVQLGSLALITLAGPIIIV.

It belongs to the Psb30/Ycf12 family. As to quaternary structure, PSII is composed of 1 copy each of membrane proteins PsbA, PsbB, PsbC, PsbD, PsbE, PsbF, PsbH, PsbI, PsbJ, PsbK, PsbL, PsbM, PsbT, PsbY, PsbZ, Psb30/Ycf12, peripheral proteins of the oxygen-evolving complex and a large number of cofactors. It forms dimeric complexes.

Its subcellular location is the plastid. The protein resides in the chloroplast thylakoid membrane. A core subunit of photosystem II (PSII), probably helps stabilize the reaction center. The protein is Photosystem II reaction center protein Psb30 of Euglena viridis (Cercaria viridis).